A 417-amino-acid polypeptide reads, in one-letter code: Blood group Rh(D) polypeptide (417 aa).

11 helical membrane passes run 12–32, 44–64, 77–97, 107–127, 130–150, 167–187, 203–223, 238–258, 287–307, 334–354, and 358–378; these read CLPLWALTLEAALILLFYFFT, LVASYQVGQDLTVMAAIGLGF, VAFNLFMLALGVQWAILLDGF, VITLFSIRLATMSALSVLISV, VLGKVNLAQLVVMVLVEVTAL, MNMMHIYVFAAYFGLSVAWCL, TIPSLSAMLGALFLWMFWPSF, VFNTYYAVAVSVVTAISGSSL, LIPSPWLAMVLGLVAGLISVG, LLGLLGEIIYIVLLVLDTVGA, and MIGFQVLLSIGELSLAIVIAL.

This sequence belongs to the ammonium transporter (TC 2.A.49) family. Rh subfamily. In terms of processing, palmitoylated. As to expression, restricted to tissues or cell lines expressing erythroid characters.

Its subcellular location is the cell membrane. Functionally, may be part of an oligomeric complex which is likely to have a transport or channel function in the erythrocyte membrane. The chain is Blood group Rh(D) polypeptide (RHD) from Homo sapiens (Human).